The chain runs to 811 residues: Zinc finger protein 839 (811 aa).

The segment at 197-222 (FKCQTCEKSYIGKGGLARHFKLNPGH) adopts a C2H2-type zinc-finger fold. Disordered stretches follow at residues 329–349 (QRRA…RASP), 455–555 (PDNL…NGSV), and 612–654 (ALEH…AEAG). Residues 476–485 (SSEKREREAA) show a composition bias toward basic and acidic residues. Polar residues predominate over residues 501–510 (SNDTTESLAA).

The chain is Zinc finger protein 839 (ZNF839) from Homo sapiens (Human).